A 660-amino-acid chain; its full sequence is Putative ABC transporter ATP-binding MG390 (660 aa).

One can recognise a Peptidase C39 domain in the interval 6-126 (QEQQNECGIC…KLWTGYAATV (121 aa)). Residue cysteine 12 is part of the active site. Helical transmembrane passes span 150–170 (LVTF…LLAT), 188–208 (LVVL…LQVI), 265–285 (YIPN…LIGI), 290–310 (FLLI…YDFF), 379–399 (SFFQ…GIIE), and 402–422 (YQLS…TYAT). Residues 464–657 (ISLENLSVTL…QNKINLTNYL (194 aa)) enclose the ABC transporter domain. Residue 494–501 (GQNGSGKS) coordinates ATP.

This sequence belongs to the ABC transporter superfamily.

The protein localises to the cell membrane. In Mycoplasma genitalium (strain ATCC 33530 / DSM 19775 / NCTC 10195 / G37) (Mycoplasmoides genitalium), this protein is Putative ABC transporter ATP-binding MG390.